Reading from the N-terminus, the 393-residue chain is Protein TsgA (393 aa).

12 consecutive transmembrane segments (helical) span residues Trp11–Met31, Phe51–Pro71, Phe78–Leu98, Thr101–Ile121, Phe140–Ile160, Trp162–Gly182, Ile206–Ile226, Thr245–Leu265, Ile273–Pro293, Ala297–Leu317, Phe332–Val352, and Leu361–Val381.

This sequence belongs to the major facilitator superfamily. TsgA family.

The protein localises to the cell inner membrane. The polypeptide is Protein TsgA (Shigella boydii serotype 18 (strain CDC 3083-94 / BS512)).